Consider the following 229-residue polypeptide: Trehalose-6-phosphate phosphatase-related protein (229 aa).

D5 functions as the Nucleophile in the catalytic mechanism. Residues D5, D7, and D177 each contribute to the Mg(2+) site. D5–D7 provides a ligand contact to substrate.

This sequence belongs to the trehalose phosphatase family. Mg(2+) serves as cofactor.

It catalyses the reaction alpha,alpha-trehalose 6-phosphate + H2O = alpha,alpha-trehalose + phosphate. It participates in glycan biosynthesis; trehalose biosynthesis. Removes the phosphate from trehalose 6-phosphate (Tre6P) to produce free trehalose. Also catalyzes the dephosphorylation of para-nitrophenyl phosphate (pNPP), but with lesser efficiency (in vitro). This is Trehalose-6-phosphate phosphatase-related protein from Thermoplasma acidophilum (strain ATCC 25905 / DSM 1728 / JCM 9062 / NBRC 15155 / AMRC-C165).